The primary structure comprises 723 residues: Polyribonucleotide nucleotidyltransferase (723 aa).

Residues aspartate 487 and aspartate 493 each contribute to the Mg(2+) site. Residues 554–613 (PKILIMHINPDKIREVIGPSGKQINKIIDETGVKIDIEQDGTIFISSVDEAANQKAKQII) form the KH domain. One can recognise an S1 motif domain in the interval 623 to 691 (GQVYLGKVKR…KQGRVNLSRK (69 aa)). Residues 702-723 (GELPRESREKRGRRPERHRMKP) form a disordered region. Residues 711-723 (KRGRRPERHRMKP) show a composition bias toward basic residues.

The protein belongs to the polyribonucleotide nucleotidyltransferase family. Mg(2+) is required as a cofactor.

The protein localises to the cytoplasm. The enzyme catalyses RNA(n+1) + phosphate = RNA(n) + a ribonucleoside 5'-diphosphate. Involved in mRNA degradation. Catalyzes the phosphorolysis of single-stranded polyribonucleotides processively in the 3'- to 5'-direction. This Geobacillus kaustophilus (strain HTA426) protein is Polyribonucleotide nucleotidyltransferase.